The chain runs to 209 residues: Small ribosomal subunit protein uS4 (209 aa).

The 64-residue stretch at 98–161 (TRLDNVVYRM…AKQLRVQEAL (64 aa)) folds into the S4 RNA-binding domain.

It belongs to the universal ribosomal protein uS4 family. As to quaternary structure, part of the 30S ribosomal subunit. Contacts protein S5. The interaction surface between S4 and S5 is involved in control of translational fidelity.

In terms of biological role, one of the primary rRNA binding proteins, it binds directly to 16S rRNA where it nucleates assembly of the body of the 30S subunit. With S5 and S12 plays an important role in translational accuracy. This chain is Small ribosomal subunit protein uS4, found in Stenotrophomonas maltophilia (strain R551-3).